Reading from the N-terminus, the 341-residue chain is tRNA N6-adenosine threonylcarbamoyltransferase (341 aa).

The Fe cation site is built by histidine 111 and histidine 115. Residues 134 to 138 (LVSGG), aspartate 167, glycine 180, and asparagine 276 contribute to the substrate site. Aspartate 304 provides a ligand contact to Fe cation.

The protein belongs to the KAE1 / TsaD family. Fe(2+) serves as cofactor.

The protein localises to the cytoplasm. The catalysed reaction is L-threonylcarbamoyladenylate + adenosine(37) in tRNA = N(6)-L-threonylcarbamoyladenosine(37) in tRNA + AMP + H(+). Functionally, required for the formation of a threonylcarbamoyl group on adenosine at position 37 (t(6)A37) in tRNAs that read codons beginning with adenine. Is involved in the transfer of the threonylcarbamoyl moiety of threonylcarbamoyl-AMP (TC-AMP) to the N6 group of A37, together with TsaE and TsaB. TsaD likely plays a direct catalytic role in this reaction. The sequence is that of tRNA N6-adenosine threonylcarbamoyltransferase from Pseudomonas fluorescens (strain Pf0-1).